We begin with the raw amino-acid sequence, 120 residues long: UPF0231 protein KPN78578_01240 (120 aa).

Belongs to the UPF0231 family.

The sequence is that of UPF0231 protein KPN78578_01240 from Klebsiella pneumoniae subsp. pneumoniae (strain ATCC 700721 / MGH 78578).